Consider the following 215-residue polypeptide: Probable transaldolase (215 aa).

Lysine 83 serves as the catalytic Schiff-base intermediate with substrate.

This sequence belongs to the transaldolase family. Type 3B subfamily.

The protein resides in the cytoplasm. The enzyme catalyses D-sedoheptulose 7-phosphate + D-glyceraldehyde 3-phosphate = D-erythrose 4-phosphate + beta-D-fructose 6-phosphate. Its pathway is carbohydrate degradation; pentose phosphate pathway; D-glyceraldehyde 3-phosphate and beta-D-fructose 6-phosphate from D-ribose 5-phosphate and D-xylulose 5-phosphate (non-oxidative stage): step 2/3. Its function is as follows. Transaldolase is important for the balance of metabolites in the pentose-phosphate pathway. In Moorella thermoacetica (strain ATCC 39073 / JCM 9320), this protein is Probable transaldolase.